Here is a 172-residue protein sequence, read N- to C-terminus: HTH-type transcriptional regulator IscR (172 aa).

Positions 2 to 131 (RLTSKGRYAV…NNITLGELMR (130 aa)) constitute an HTH rrf2-type domain. A DNA-binding region (H-T-H motif) is located at residues 28-51 (LADISERQGISLSYLEQLFSRLRK). [2Fe-2S] cluster contacts are provided by C92, C98, and C104.

Requires [2Fe-2S] cluster as cofactor.

In terms of biological role, regulates the transcription of several operons and genes involved in the biogenesis of Fe-S clusters and Fe-S-containing proteins. The chain is HTH-type transcriptional regulator IscR from Photobacterium profundum (strain SS9).